Here is a 121-residue protein sequence, read N- to C-terminus: Nitrogenase-stabilizing/protective protein NifW (121 aa).

Belongs to the NifW family. Homotrimer; associates with NifD.

In terms of biological role, may protect the nitrogenase Fe-Mo protein from oxidative damage. The protein is Nitrogenase-stabilizing/protective protein NifW of Leptothrix cholodnii (strain ATCC 51168 / LMG 8142 / SP-6) (Leptothrix discophora (strain SP-6)).